The sequence spans 256 residues: Diaminopimelate epimerase (256 aa).

Positions 11 and 63 each coordinate substrate. Cys72 functions as the Proton donor in the catalytic mechanism. Substrate-binding positions include 73 to 74 (GN), Asn169, and 187 to 188 (ER). The active-site Proton acceptor is the Cys197. 198–199 (GT) contributes to the substrate binding site.

It belongs to the diaminopimelate epimerase family. In terms of assembly, homodimer.

The protein localises to the cytoplasm. It carries out the reaction (2S,6S)-2,6-diaminopimelate = meso-2,6-diaminopimelate. Its pathway is amino-acid biosynthesis; L-lysine biosynthesis via DAP pathway; DL-2,6-diaminopimelate from LL-2,6-diaminopimelate: step 1/1. Catalyzes the stereoinversion of LL-2,6-diaminopimelate (L,L-DAP) to meso-diaminopimelate (meso-DAP), a precursor of L-lysine and an essential component of the bacterial peptidoglycan. The polypeptide is Diaminopimelate epimerase (Flavobacterium psychrophilum (strain ATCC 49511 / DSM 21280 / CIP 103535 / JIP02/86)).